Consider the following 240-residue polypeptide: Tetrahydromethanopterin S-methyltransferase subunit A (240 aa).

Topologically, residues 1–218 (MADKKEPAPG…KFHSGVHAGK (218 aa)) are cytoplasmic. Residue histidine 85 coordinates 5-hydroxybenzimidazolylcob(I)amide. Residues 219-239 (IEGAMIGLTVTISLLGLLLLG) traverse the membrane as a helical segment. Position 240 (arginine 240) is a topological domain, extracellular.

Belongs to the MtrA family. As to quaternary structure, the complex is composed of 8 subunits; MtrA, MtrB, MtrC, MtrD, MtrE, MtrF, MtrG and MtrH. Requires 5-hydroxybenzimidazolylcob(I)amide as cofactor.

It localises to the cell membrane. The catalysed reaction is 5-methyl-5,6,7,8-tetrahydromethanopterin + coenzyme M + 2 Na(+)(in) = 5,6,7,8-tetrahydromethanopterin + methyl-coenzyme M + 2 Na(+)(out). It functions in the pathway one-carbon metabolism; methanogenesis from CO(2); methyl-coenzyme M from 5,10-methylene-5,6,7,8-tetrahydromethanopterin: step 2/2. In terms of biological role, part of a complex that catalyzes the formation of methyl-coenzyme M and tetrahydromethanopterin from coenzyme M and methyl-tetrahydromethanopterin. This is an energy-conserving, sodium-ion translocating step. The sequence is that of Tetrahydromethanopterin S-methyltransferase subunit A from Methanosarcina barkeri (strain Fusaro / DSM 804).